Here is a 73-residue protein sequence, read N- to C-terminus: MKRLIPVALLTALLAGCAHDSPCVPVYDDQGRLVHTNTCMKGTTQDNWETAGAIAGGAAAVAGLTMGIIALSK.

Transmembrane regions (helical) follow at residues 4-24 and 51-71; these read LIPV…SPCV and AGAI…IIAL.

The protein resides in the cell membrane. This is an uncharacterized protein from Escherichia coli O157:H7.